The chain runs to 269 residues: Shikimate dehydrogenase (NADP(+)) (269 aa).

Shikimate-binding positions include 22-24 (TLS) and Thr68. Catalysis depends on Lys72, which acts as the Proton acceptor. Shikimate is bound by residues Asn93 and Asp104. NADP(+)-binding positions include 128-132 (GAGGA), 152-157 (NRTKSR), and Phe210. Tyr212 is a shikimate binding site. Gly233 is a binding site for NADP(+).

Belongs to the shikimate dehydrogenase family. Homodimer.

The enzyme catalyses shikimate + NADP(+) = 3-dehydroshikimate + NADPH + H(+). The protein operates within metabolic intermediate biosynthesis; chorismate biosynthesis; chorismate from D-erythrose 4-phosphate and phosphoenolpyruvate: step 4/7. Functionally, involved in the biosynthesis of the chorismate, which leads to the biosynthesis of aromatic amino acids. Catalyzes the reversible NADPH linked reduction of 3-dehydroshikimate (DHSA) to yield shikimate (SA). This chain is Shikimate dehydrogenase (NADP(+)), found in Saccharolobus solfataricus (strain ATCC 35092 / DSM 1617 / JCM 11322 / P2) (Sulfolobus solfataricus).